We begin with the raw amino-acid sequence, 150 residues long: Ribonuclease pancreatic (150 aa).

A signal peptide spans 1-26 (MALKSLVLLSLLVLVLLLVRVQPSLG). Residues Lys27 and Lys33 are each glycosylated (N-linked (Glc) (glycation) lysine; in vitro). 2 residues coordinate substrate: Lys33 and Arg36. His38 acts as the Proton acceptor in catalysis. Intrachain disulfides connect Cys52–Cys110, Cys66–Cys121, Cys84–Cys136, and Cys91–Cys98. N-linked (GlcNAc...) asparagine; partial glycosylation occurs at Asn60. N-linked (Glc) (glycation) lysine; in vitro glycosylation is found at Lys63 and Lys67. Substrate contacts are provided by residues 67–71 (KPVNT), Lys92, and Arg111. His145 (proton donor) is an active-site residue.

This sequence belongs to the pancreatic ribonuclease family. Interacts with and forms tight 1:1 complexes with RNH1. Dimerization of two such complexes may occur. Interaction with RNH1 inhibits this protein. Monomer. As to expression, pancreas.

The protein resides in the secreted. The enzyme catalyses an [RNA] containing cytidine + H2O = an [RNA]-3'-cytidine-3'-phosphate + a 5'-hydroxy-ribonucleotide-3'-[RNA].. It catalyses the reaction an [RNA] containing uridine + H2O = an [RNA]-3'-uridine-3'-phosphate + a 5'-hydroxy-ribonucleotide-3'-[RNA].. Endonuclease that catalyzes the cleavage of RNA on the 3' side of pyrimidine nucleotides. Acts on single-stranded and double-stranded RNA. The chain is Ribonuclease pancreatic (RNASE1) from Bos taurus (Bovine).